A 396-amino-acid polypeptide reads, in one-letter code: NAD(P)H oxidoreductase RTN4IP1, mitochondrial (396 aa).

A mitochondrion-targeting transit peptide spans 1–40 (MGVLKTCVLRRSACAAACFWRRTVIPKPPFRGISTTSARS). The Enoyl reductase (ER) domain occupies 52–393 (GKNEVLRFTQ…RGHARGKTVV (342 aa)). 12 residues coordinate NADPH: serine 214, glycine 216, valine 217, serine 237, tyrosine 255, asparagine 276, leucine 300, alanine 341, phenylalanine 343, histidine 386, alanine 387, and arginine 388.

It belongs to the zinc-containing alcohol dehydrogenase family. Quinone oxidoreductase subfamily. Interacts with RTN4, UQCRC1 and UQCRC2. As to expression, widely expressed in mitochondria-enriched tissues. Found in heart, kidney, liver, brain and spinal cord.

The protein localises to the mitochondrion matrix. It localises to the mitochondrion outer membrane. The catalysed reaction is a 3-demethylubiquinone + NADH + 2 H(+) = a 3-demethylubiquinol + NAD(+). It carries out the reaction a 3-demethylubiquinone + NADPH + 2 H(+) = a 3-demethylubiquinol + NADP(+). The enzyme catalyses 3-demethylubiquinone-10 + NADH + 2 H(+) = 3-demethylubiquinol-10 + NAD(+). It catalyses the reaction 3-demethylubiquinone-10 + NADPH + 2 H(+) = 3-demethylubiquinol-10 + NADP(+). The protein operates within cofactor biosynthesis; ubiquinone biosynthesis. Its function is as follows. NAD(P)H oxidoreductase involved in the ubiquinone biosynthetic pathway. Required for the O-methyltransferase activity of COQ3. Able to catalyze the oxidoreduction of 3-demethylubiquinone into 3-demethylubiquinol in vitro. However, it is unclear if 3-demethylubiquinone constitutes a substrate in vivo. May also play a role in the regulation of retinal ganglion cell (RGC) neurite outgrowth, and hence in the development of the inner retina and optic nerve. Appears to be a potent inhibitor of regeneration following spinal cord injury. The protein is NAD(P)H oxidoreductase RTN4IP1, mitochondrial of Mus musculus (Mouse).